Here is a 316-residue protein sequence, read N- to C-terminus: Acetaldehyde dehydrogenase (316 aa).

NAD(+) is bound at residue 12–15; it reads SGNI. The active-site Acyl-thioester intermediate is Cys132. NAD(+) is bound by residues 163 to 171 and Asn289; that span reads SAGPGTRAN.

Belongs to the acetaldehyde dehydrogenase family.

It catalyses the reaction acetaldehyde + NAD(+) + CoA = acetyl-CoA + NADH + H(+). The polypeptide is Acetaldehyde dehydrogenase (bphG) (Bordetella avium (strain 197N)).